The chain runs to 570 residues: MTEPIISFKDFSFQYHSQATPTLQNINVDIYPGEKVLVVGASGSGKSTFANCINGLIPFKTKGNITGELYINNQDATVSCLHDRSNVVGTVLQDTDGQFIGLTAAEDMAFLLENNCVEQDDMKKNVSYWAEKVGMIEHLNHRPQDLSGGQKQRVSLGGILIHRTPILILDEPLANLDPATGHETLRLLNNIHEETKSTMIIVEHRLEESLDDTFDRVLLFKDGKIIANTTPSDLLKSSKLKEAGIREPLYCTALKYAEVDVESIDNLANLRDVCMSEHVKFKVKKWIDETSANNDNKYKSEPLLELNEVCVQYSDYSNSVLNNVQLNVYRREMLSIVGHNGAGKSTLAKAICGFLDITGNIQFCNRGFNQLSISERSEFVGYVMQNPNHMISEKMIYDEVALGLRARGMKESDIKIRVENVLKICGLYAFRNWPIAALSYGQKKRVTIASVLVLNPEIIILDEPTAGQDFYHYNEIMSFLIELNRQGKTIIMITHDMHLLSEYSSRTVVLSKGQVVADTTPVLVLNDKKICEIASLRQTSLFEMAEYIGISEPQKLVQLFINHDRKVRRQ.

2 consecutive ABC transporter domains span residues Ile-6 to Glu-247 and Leu-304 to Arg-537. Residues Gly-40–Ser-47 and Gly-338–Ser-345 each bind ATP.

Belongs to the ABC transporter superfamily.

It is found in the cell membrane. In terms of biological role, probably part of an ABC transporter complex. Responsible for energy coupling to the transport system. The protein is Putative ABC transporter ATP-binding protein SACOL2708 of Staphylococcus aureus (strain COL).